The primary structure comprises 516 residues: Flavonoid 3',5'-hydroxylase (516 aa).

Cysteine 453 contacts heme.

It belongs to the cytochrome P450 family. The cofactor is heme.

It catalyses the reaction a 3',5'-unsubstituted flavanone + 2 reduced [NADPH--hemoprotein reductase] + 2 O2 = a 3',5'-dihydroxyflavanone + 2 oxidized [NADPH--hemoprotein reductase] + 2 H2O + 2 H(+). The protein operates within pigment biosynthesis; anthocyanin biosynthesis. Catalyzes the 3'5'-hydroxylation of naringenin and eriodictyol to form 5,7,3,'4',5'-pentahydroxyflavanone and 3',5'-hydroxylation of dihydrokaempferol and dihydroquercetin to form dihydromyricetin. The sequence is that of Flavonoid 3',5'-hydroxylase (CYP75A4) from Gentiana triflora (Clustered gentian).